A 171-amino-acid polypeptide reads, in one-letter code: Large ribosomal subunit protein bL9 (171 aa).

It belongs to the bacterial ribosomal protein bL9 family.

Its function is as follows. Binds to the 23S rRNA. The protein is Large ribosomal subunit protein bL9 of Rickettsia felis (strain ATCC VR-1525 / URRWXCal2) (Rickettsia azadi).